Consider the following 592-residue polypeptide: MPDTITNKLQNSTVQDVIATKLARAVFAGFEAMFATFLNITLGAQSRFEQRQYHEVQSAMRERLQVYERQVKSVSEAVKVIAYAELSCPQTWQLAKNIYGNMVKNHENEPIAHTFFNSTFGAIWDDKKIRTVHLFVLKAKYRTQPRPYDSLVKRISLQHGFNSAIKTLITNQVFRVPFSNLNQDVATLQATLTQGAKQQCRQVYELINLNDGYIEYAYSHFYRNKACYLIGRCIAKNGDNMPFAIAILNTPKGLKIDAVMMGADQLSLLFGFARTYFMVDTDQPARYVDYLSVLMPHKQRFELFNAIGFIKHAKTEFYRYKVDTTKNSPASFKYVAAPGTPGMVMLVFTIAGSDHVYKVIKDKFSAPKTATKAQVKEKYNFVKQADRVGRLVDTHEFRYLAFDLSRFSEQLLQQMKEHIGSSLIISGKALILKHVYVERKMTPLNLYINDCDSKALAQVMLDYGRAIKDLAGANIFPGDMLMKNFGVTRWGRVVFYDYDEICPLTDCNFREVPQTQNALEELSSDSYFDIEPNDIFPSQFKVFFSANELAFNAFNSHHSDLFNAQFWQTCQQQVQQGYLPDVYPYKQSWRFK.

ATP is bound by residues 337-343 and K358; that span reads APGTPGM. D393 is a catalytic residue.

Belongs to the AceK family.

The protein resides in the cytoplasm. It carries out the reaction L-seryl-[isocitrate dehydrogenase] + ATP = O-phospho-L-seryl-[isocitrate dehydrogenase] + ADP + H(+). Its function is as follows. Bifunctional enzyme which can phosphorylate or dephosphorylate isocitrate dehydrogenase (IDH) on a specific serine residue. This is a regulatory mechanism which enables bacteria to bypass the Krebs cycle via the glyoxylate shunt in response to the source of carbon. When bacteria are grown on glucose, IDH is fully active and unphosphorylated, but when grown on acetate or ethanol, the activity of IDH declines drastically concomitant with its phosphorylation. This chain is Isocitrate dehydrogenase kinase/phosphatase 1, found in Pseudoalteromonas translucida (strain TAC 125).